The following is a 307-amino-acid chain: Follistatin-related protein 1 (307 aa).

The N-terminal stretch at 1–19 (MMWRRWLALALVAVAWVHA) is a signal peptide. The region spanning 29–52 (ICANVFCGAGRECAVTEKGEPTCL) is the Follistatin-like domain. 5 disulfides stabilise this stretch: Cys30–Cys41, Cys35–Cys51, Cys53–Cys83, Cys57–Cys76, and Cys65–Cys97. The 53-residue stretch at 47–99 (GEPTCLCIEQCKPHKRPVCGSNGKTYLNHCELHRDACLTGSKIQVDYDGHCKE) folds into the Kazal-like domain. The N-linked (GlcNAc...) asparagine glycan is linked to Asn143. An EF-hand 1 domain is found at 143-177 (NYSEILDKYFKNFDNGDSRLDSSEFLKFVEQNETA). A Phosphoserine modification is found at Ser164. N-linked (GlcNAc...) asparagine glycosylation is found at Asn174 and Asn179. An EF-hand 2 domain is found at 192–227 (LRGLCVDALIELSDENADWKLSFQEFLKCLNPSFNP). The VWFC domain maps to 232-286 (CALEDETYADGAETEVDCNRCVCACGNWVCTAMTCDGKNQKGAQTQAEEEMTRYV).

As to quaternary structure, homodimer. Interacts with SCN10A. Interacts with DIP2A; DIP2A may act as a cell surface receptor for FSTL1. Interacts with BMP4. Interacts with CD14; this interaction promotes TL4-mediated signaling cascade.

Its subcellular location is the secreted. In terms of biological role, secreted glycoprotein that is involved in various physiological processes, such as angiogenesis, regulation of the immune response, cell proliferation and differentiation. Plays a role in the development of the central nervous system, skeletal system, lungs, and ureter. Promotes endothelial cell survival, migration and differentiation into network structures in an AKT-dependent manner. Also promotes survival of cardiac myocytes. Initiates various signaling cascades by activating different receptors on the cell surface such as DIP2A, TLR4 or BMP receptors. The chain is Follistatin-related protein 1 (FSTL1) from Bos taurus (Bovine).